A 345-amino-acid polypeptide reads, in one-letter code: tRNA-dihydrouridine(20/20a) synthase (345 aa).

FMN-binding positions include 32 to 34 and glutamine 84; that span reads PML. Cysteine 114 (proton donor) is an active-site residue. FMN contacts are provided by residues lysine 153, histidine 186, 226–228, and 248–249; these read NGG and GR.

Belongs to the Dus family. DusA subfamily. Requires FMN as cofactor.

It carries out the reaction 5,6-dihydrouridine(20) in tRNA + NADP(+) = uridine(20) in tRNA + NADPH + H(+). It catalyses the reaction 5,6-dihydrouridine(20) in tRNA + NAD(+) = uridine(20) in tRNA + NADH + H(+). The enzyme catalyses 5,6-dihydrouridine(20a) in tRNA + NADP(+) = uridine(20a) in tRNA + NADPH + H(+). The catalysed reaction is 5,6-dihydrouridine(20a) in tRNA + NAD(+) = uridine(20a) in tRNA + NADH + H(+). Catalyzes the synthesis of 5,6-dihydrouridine (D), a modified base found in the D-loop of most tRNAs, via the reduction of the C5-C6 double bond in target uridines. Specifically modifies U20 and U20a in tRNAs. This is tRNA-dihydrouridine(20/20a) synthase from Escherichia coli O157:H7.